The primary structure comprises 356 residues: Tyrosine recombinase XerS (356 aa).

The Core-binding (CB) domain maps to 16–121 (LMPWYVLEYY…ALSSLYKYLT (106 aa)). Residues 169–354 (GFLTYIDQEH…VNDEQKNALD (186 aa)) form the Tyr recombinase domain. Catalysis depends on residues Arg-210, Lys-234, His-306, Arg-309, and His-332. Tyr-341 serves as the catalytic O-(3'-phospho-DNA)-tyrosine intermediate.

The protein belongs to the 'phage' integrase family. XerS subfamily.

It is found in the cytoplasm. Its activity is regulated as follows. FtsK is required for recombination. Site-specific tyrosine recombinase, which acts by catalyzing the cutting and rejoining of the recombining DNA molecules. Essential to convert dimers of the bacterial chromosome into monomers to permit their segregation at cell division. The protein is Tyrosine recombinase XerS of Streptococcus pneumoniae (strain P1031).